The following is a 94-amino-acid chain: Large ribosomal subunit protein eL14 (94 aa).

It belongs to the eukaryotic ribosomal protein eL14 family.

This Methanopyrus kandleri (strain AV19 / DSM 6324 / JCM 9639 / NBRC 100938) protein is Large ribosomal subunit protein eL14.